A 208-amino-acid polypeptide reads, in one-letter code: Small ribosomal subunit protein uS4 (208 aa).

Positions 98 to 158 (GRLDNVVYRM…EKSKKQARIK (61 aa)) constitute an S4 RNA-binding domain.

This sequence belongs to the universal ribosomal protein uS4 family. As to quaternary structure, part of the 30S ribosomal subunit. Contacts protein S5. The interaction surface between S4 and S5 is involved in control of translational fidelity.

In terms of biological role, one of the primary rRNA binding proteins, it binds directly to 16S rRNA where it nucleates assembly of the body of the 30S subunit. Its function is as follows. With S5 and S12 plays an important role in translational accuracy. This Actinobacillus pleuropneumoniae serotype 5b (strain L20) protein is Small ribosomal subunit protein uS4.